Here is a 483-residue protein sequence, read N- to C-terminus: FAD-dependent oxidoreductase oblC (483 aa).

A signal peptide spans 1-21; it reads MRSVTSLVSFSACLLASSVTA. N-linked (GlcNAc...) asparagine glycosylation is found at asparagine 100, asparagine 137, asparagine 190, and asparagine 240.

It belongs to the beta-cyclopiazonate dehydrogenase family. The cofactor is FAD.

It participates in secondary metabolite biosynthesis; terpenoid biosynthesis. FAD-dependent oxidoreductase; part of the gene cluster that mediates the biosynthesis of the sesterterpenes ophiobolins, fungal phytotoxins with potential anti-cancer activities. The first step of the pathway is performed by the sesterterpene synthase oblA that possesses both prenyl transferase and terpene cyclase activity, converting isopentenyl diphosphate and dimethylallyl diphosphate into geranylfarnesyl diphosphate (GFPP) and further converting GFPP into ophiobolin F, respectively. Other sesterterpenoids (C(25) terpenoids) are found as minor products of oblA. The cytochrome P450 monooxygenase oblB then catalyzes a four-step oxidative transformation of ophiobolin F to yield ophiobolin C. The FAD-dependent oxidoreductase oblC might be involved in a later oxidation step that produces ophiobolin A. This Cochliobolus heterostrophus (strain C5 / ATCC 48332 / race O) (Southern corn leaf blight fungus) protein is FAD-dependent oxidoreductase oblC.